Here is a 312-residue protein sequence, read N- to C-terminus: Expansin-A24 (312 aa).

Positions 1-27 (MELLKRKLYAKILMMVMVIWIAPMTNG) are cleaved as a signal peptide. The tract at residues 31–86 (ASHVPGGRPGAHPSHGAHPAHGAHPSHGAHPSHGAHPSHGAHPSHGALPSHGGQVP) is disordered. Over residues 40 to 77 (GAHPSHGAHPAHGAHPSHGAHPSHGAHPSHGAHPSHGA) the composition is skewed to low complexity. Repeat copies occupy residues 42–47 (HPSHGA), 48–53 (HPAHGA), 54–59 (HPSHGA), 60–65 (HPSHGA), 66–71 (HPSHGA), and 72–77 (HPSHGA). Residues 42–77 (HPSHGAHPAHGAHPSHGAHPSHGAHPSHGAHPSHGA) are 6 X 6 AA tandem repeats of H-P-S-H-G-A. In terms of domain architecture, Expansin-like EG45 spans 108–218 (QGACGYGDLH…RRVPCAKIGG (111 aa)). An Expansin-like CBD domain is found at 228 to 307 (HFLMILPYNV…DWKCNGQSFD (80 aa)).

Belongs to the expansin family. Expansin A subfamily.

Its subcellular location is the secreted. It localises to the cell wall. The protein localises to the membrane. Its function is as follows. Causes loosening and extension of plant cell walls by disrupting non-covalent bonding between cellulose microfibrils and matrix glucans. No enzymatic activity has been found. This Arabidopsis thaliana (Mouse-ear cress) protein is Expansin-A24 (EXPA24).